Here is a 376-residue protein sequence, read N- to C-terminus: DNA repair protein RAD51 homolog 3 (376 aa).

Residues 1–126 (MRGKTFRFEM…LMKTTEICGA (126 aa)) are required for Holliday junction resolution activity. Ser-20 is subject to Phosphoserine. The interval 79-136 (SESHKKCTALELLEQEHTQGFIITFCSALDDILGGGVPLMKTTEICGAPGVGKTQLCM) is interaction with RAD51B, RAD51D and XRCC3. 125 to 132 (GAPGVGKT) contacts ATP. The short motif at 366–370 (RKRSR) is the Nuclear localization signal element.

Belongs to the RecA family. RAD51 subfamily. Part of the RAD51 paralog protein complexes BCDX2 and CX3; the complexes have a ring-like structure arranged into a flat disc around a central channel. The BCDX2 complex consits of RAD51B, RAD51C, RAD51D and XRCC2; the CX3 complex consists of RAD51C and XRCC3. The BCDX2 subcomplex RAD51B:RAD51C interacts with RAD51. Interacts with SWSAP1; involved in homologous recombination repair. Interacts directly with PALB2 which may serve as a scaffold for a HR complex containing PALB2, BRCA2, RAD51C, RAD51 and XRCC3. Interacts with HELQ. Interacts with DNA damage up-regulated protein DDUP. In terms of tissue distribution, expressed in a variety of tissues, with highest expression in testis, heart muscle, spleen and prostate.

It localises to the nucleus. The protein localises to the cytoplasm. Its subcellular location is the perinuclear region. It is found in the mitochondrion. Essential for the homologous recombination (HR) pathway of DNA repair. Involved in the homologous recombination repair (HRR) pathway of double-stranded DNA breaks arising during DNA replication or induced by DNA-damaging agents. Part of the RAD51 paralog protein complexes BCDX2 and CX3 which act at different stages of the BRCA1-BRCA2-dependent HR pathway. Upon DNA damage, BCDX2 seems to act downstream of BRCA2 recruitment and upstream of RAD51 recruitment; CX3 seems to act downstream of RAD51 recruitment; both complexes bind predominantly to the intersection of the four duplex arms of the Holliday junction (HJ) and to junction of replication forks. The BCDX2 complex was originally reported to bind single-stranded DNA, single-stranded gaps in duplex DNA and specifically to nicks in duplex DNA. The BCDX2 subcomplex RAD51B:RAD51C exhibits single-stranded DNA-dependent ATPase activity suggesting an involvement in early stages of the HR pathway. Involved in RAD51 foci formation in response to DNA damage suggesting an involvement in early stages of HR probably in the invasion step. Has an early function in DNA repair in facilitating phosphorylation of the checkpoint kinase CHEK2 and thereby transduction of the damage signal, leading to cell cycle arrest and HR activation. Participates in branch migration and HJ resolution and thus is important for processing HR intermediates late in the DNA repair process; the function may be linked to the CX3 complex. Part of a PALB2-scaffolded HR complex containing BRCA2 and which is thought to play a role in DNA repair by HR. Protects RAD51 from ubiquitin-mediated degradation that is enhanced following DNA damage. Plays a role in regulating mitochondrial DNA copy number under conditions of oxidative stress in the presence of RAD51 and XRCC3. Contributes to DNA cross-link resistance, sister chromatid cohesion and genomic stability. Involved in maintaining centrosome number in mitosis. The sequence is that of DNA repair protein RAD51 homolog 3 (RAD51C) from Homo sapiens (Human).